A 244-amino-acid polypeptide reads, in one-letter code: Ribonuclease PH (244 aa).

Residues R87 and 125-127 each bind phosphate; that span reads GTR.

Belongs to the RNase PH family. Homohexameric ring arranged as a trimer of dimers.

It carries out the reaction tRNA(n+1) + phosphate = tRNA(n) + a ribonucleoside 5'-diphosphate. Its function is as follows. Phosphorolytic 3'-5' exoribonuclease that plays an important role in tRNA 3'-end maturation. Removes nucleotide residues following the 3'-CCA terminus of tRNAs; can also add nucleotides to the ends of RNA molecules by using nucleoside diphosphates as substrates, but this may not be physiologically important. Probably plays a role in initiation of 16S rRNA degradation (leading to ribosome degradation) during starvation. This Synechococcus sp. (strain JA-2-3B'a(2-13)) (Cyanobacteria bacterium Yellowstone B-Prime) protein is Ribonuclease PH.